A 325-amino-acid polypeptide reads, in one-letter code: Diacylglycerol acyltransferase/mycolyltransferase Ag85B (325 aa).

The first 40 residues, 1-40, serve as a signal peptide directing secretion; sequence MTDVSRKIRAWGRRLMIGTAAAVVLPGLVGLAGGAATAGA. 82-83 contributes to the substrate binding site; that stretch reads LR. A fibronectin-binding region spans residues 98 to 108; sequence FEWYYQSGLSI. A disulfide bridge links Cys127 with Cys132. Substrate contacts are provided by Ser166 and Asp194. Ser166 serves as the catalytic Nucleophile. The active site involves Glu270. Residues 272–275, Lys279, and 302–304 each bind substrate; these read FVRS and HSW. His302 is a catalytic residue.

This sequence belongs to the mycobacterial A85 antigen family.

Its subcellular location is the secreted. It catalyses the reaction 2 alpha,alpha'-trehalose 6-mycolate = alpha,alpha'-trehalose 6,6'-bismycolate + alpha,alpha-trehalose. It carries out the reaction an acyl-CoA + a 1,2-diacyl-sn-glycerol = a triacyl-sn-glycerol + CoA. The antigen 85 proteins (FbpA, FbpB, FbpC) are responsible for the high affinity of mycobacteria for fibronectin, a large adhesive glycoprotein, which facilitates the attachment of Mycobacteria to murine alveolar macrophages (AMs). They also help to maintain the integrity of the cell wall by catalyzing the transfer of mycolic acids to cell wall arabinogalactan and through the synthesis of alpha,alpha-trehalose dimycolate (TDM, cord factor). They catalyze the transfer of a mycoloyl residue from one molecule of alpha,alpha-trehalose monomycolate (TMM) to another TMM, leading to the formation of TDM. This is Diacylglycerol acyltransferase/mycolyltransferase Ag85B (fbpB) from Mycobacterium bovis (strain BCG / Pasteur 1173P2).